Here is a 325-residue protein sequence, read N- to C-terminus: Holliday junction branch migration complex subunit RuvB (325 aa).

The interval 1 to 181 (MENRLINPVE…FGIVQRLEFY (181 aa)) is large ATPase domain (RuvB-L). ATP contacts are provided by residues Ile-20, Arg-21, Gly-62, Lys-65, Thr-66, Thr-67, 128 to 130 (EDF), Arg-171, Tyr-181, and Arg-218. Thr-66 contacts Mg(2+). Residues 182–252 (NIEDLTTIVS…IADSALDMLA (71 aa)) form a small ATPAse domain (RuvB-S) region. The head domain (RuvB-H) stretch occupies residues 255–325 (RRGLDHLDRR…VLTQMAIDQL (71 aa)). Arg-291, Arg-310, and Arg-315 together coordinate DNA.

The protein belongs to the RuvB family. In terms of assembly, homohexamer. Forms an RuvA(8)-RuvB(12)-Holliday junction (HJ) complex. HJ DNA is sandwiched between 2 RuvA tetramers; dsDNA enters through RuvA and exits via RuvB. An RuvB hexamer assembles on each DNA strand where it exits the tetramer. Each RuvB hexamer is contacted by two RuvA subunits (via domain III) on 2 adjacent RuvB subunits; this complex drives branch migration. In the full resolvosome a probable DNA-RuvA(4)-RuvB(12)-RuvC(2) complex forms which resolves the HJ.

It localises to the cytoplasm. It catalyses the reaction ATP + H2O = ADP + phosphate + H(+). Functionally, the RuvA-RuvB-RuvC complex processes Holliday junction (HJ) DNA during genetic recombination and DNA repair, while the RuvA-RuvB complex plays an important role in the rescue of blocked DNA replication forks via replication fork reversal (RFR). RuvA specifically binds to HJ cruciform DNA, conferring on it an open structure. The RuvB hexamer acts as an ATP-dependent pump, pulling dsDNA into and through the RuvAB complex. RuvB forms 2 homohexamers on either side of HJ DNA bound by 1 or 2 RuvA tetramers; 4 subunits per hexamer contact DNA at a time. Coordinated motions by a converter formed by DNA-disengaged RuvB subunits stimulates ATP hydrolysis and nucleotide exchange. Immobilization of the converter enables RuvB to convert the ATP-contained energy into a lever motion, pulling 2 nucleotides of DNA out of the RuvA tetramer per ATP hydrolyzed, thus driving DNA branch migration. The RuvB motors rotate together with the DNA substrate, which together with the progressing nucleotide cycle form the mechanistic basis for DNA recombination by continuous HJ branch migration. Branch migration allows RuvC to scan DNA until it finds its consensus sequence, where it cleaves and resolves cruciform DNA. The protein is Holliday junction branch migration complex subunit RuvB of Psychrobacter sp. (strain PRwf-1).